The primary structure comprises 344 residues: MKTNFLVLLSALLAASSAVTATLIPAKCKHEAFSQRAGSSLNAAIKSDGRKYFGTCADPGTLGNWQISNIIKAEMGQVTPENSMKWDATQPQRGTFNFGNADRLVDFATSNGKLIRGHTLVWHSQLPSWVSSITDANDLTNVIQNRIATVVGRYKGKVYAWDVVNEMFNENGSFRESVFYKLLGEDFVKIAFEAARKADPNAKLYINDYNLDDPDYPKLKSLVANVKKWRSQGVPIDGIGSQSHLQAAGHFLDASKVGGAMQALCAAASECAMTELDIAQASPDQYTKATEACLNQKNCVGITVWGVSDNTSWRKNANPLLWNSSYQKKPAYNAVLSTLNSYQA.

A signal peptide spans 1–21 (MKTNFLVLLSALLAASSAVTA). One can recognise a GH10 domain in the interval 35 to 338 (QRAGSSLNAA…KPAYNAVLST (304 aa)). The active-site Proton donor is E166. The N-linked (GlcNAc...) asparagine glycan is linked to N171. Catalysis depends on E275, which acts as the Nucleophile. A disulfide bridge connects residues C293 and C299. N-linked (GlcNAc...) asparagine glycans are attached at residues N310 and N323.

This sequence belongs to the glycosyl hydrolase 10 (cellulase F) family.

It localises to the secreted. It catalyses the reaction Endohydrolysis of (1-&gt;4)-beta-D-xylosidic linkages in xylans.. The protein operates within glycan degradation; xylan degradation. Its function is as follows. Endo-1,4-beta-xylanase involved in the hydrolysis of xylan, a major structural heterogeneous polysaccharide found in plant biomass representing the second most abundant polysaccharide in the biosphere, after cellulose. This is Endo-1,4-beta-xylanase UM03411 from Mycosarcoma maydis (Corn smut fungus).